The chain runs to 292 residues: Zinc finger protein OZF (292 aa).

10 C2H2-type zinc fingers span residues 16–38 (FACK…EHFH), 44–66 (FECN…QNTH), 72–94 (LECN…QKIH), 100–122 (FECK…QRTH), 128–150 (FICK…EKIH), 156–178 (FKCN…QNIH), 184–206 (YECN…VRIH), 212–234 (YECN…VRSH), 240–262 (YGCN…LRIH), and 268–290 (YQCS…QKIH). Glycyl lysine isopeptide (Lys-Gly) (interchain with G-Cter in SUMO2) cross-links involve residues Lys-28, Lys-51, and Lys-56. Glycyl lysine isopeptide (Lys-Gly) (interchain with G-Cter in SUMO) cross-links involve residues Lys-157 and Lys-169. Residue Lys-173 forms a Glycyl lysine isopeptide (Lys-Gly) (interchain with G-Cter in SUMO2) linkage. Residues 212–292 (YECNVCGKAF…HIRHQKIHTH (81 aa)) are interaction with TERF2IP.

Belongs to the krueppel C2H2-type zinc-finger protein family. In terms of assembly, binds DNA. Interacts with SUMO conjugating enzyme UBC9/UBE2I. Interacts with the telomeric protein TERF2IP.

Its subcellular location is the nucleus. This Bos taurus (Bovine) protein is Zinc finger protein OZF (ZNF146).